The following is a 150-amino-acid chain: UPF0178 protein Sbal195_1808 (150 aa).

It belongs to the UPF0178 family.

The polypeptide is UPF0178 protein Sbal195_1808 (Shewanella baltica (strain OS195)).